We begin with the raw amino-acid sequence, 552 residues long: HTH-type transcriptional regulator SgrR (552 aa).

The 116-residue stretch at 1–116 folds into the HTH marR-type domain; it reads MPSGRLQQQF…LISHLGRSFR (116 aa). The segment at residues 26–49 is a DNA-binding region (H-T-H motif); that stretch reads LNELADLLNCSRRHMRTLLNTMQA. The segment at 163 to 493 is solute-binding; sequence ELEADIAHHW…RDWQDDAAQW (331 aa).

In terms of biological role, activates the small RNA gene sgrS under glucose-phosphate stress conditions as well as yfdZ. Represses its own transcription under both stress and non-stress conditions. Might act as a sensor of the intracellular accumulation of phosphoglucose by binding these molecules in its C-terminal solute-binding domain. This Salmonella choleraesuis (strain SC-B67) protein is HTH-type transcriptional regulator SgrR.